Here is a 437-residue protein sequence, read N- to C-terminus: GTPase Der (437 aa).

EngA-type G domains follow at residues 4-168 (NIVA…PEKP) and 178-353 (PRFA…ENRK). GTP contacts are provided by residues 10–17 (GRPNVGKS), 57–61 (DTGGY), 120–123 (NKVD), 184–191 (GRPNAGKS), 231–235 (DTAGI), and 296–299 (NKWD). One can recognise a KH-like domain in the interval 354-437 (QRISTSKFNE…VPIDIYIREK (84 aa)).

This sequence belongs to the TRAFAC class TrmE-Era-EngA-EngB-Septin-like GTPase superfamily. EngA (Der) GTPase family. In terms of assembly, associates with the 50S ribosomal subunit.

Functionally, GTPase that plays an essential role in the late steps of ribosome biogenesis. The sequence is that of GTPase Der from Flavobacterium johnsoniae (strain ATCC 17061 / DSM 2064 / JCM 8514 / BCRC 14874 / CCUG 350202 / NBRC 14942 / NCIMB 11054 / UW101) (Cytophaga johnsonae).